A 348-amino-acid polypeptide reads, in one-letter code: ECA polysaccharide chain length modulation protein (348 aa).

Residues 1–30 are Cytoplasmic-facing; sequence MTQPMPGKPAEDAENELDIRGLFRTLWAGK. The chain crosses the membrane as a helical span at residues 31-51; that stretch reads LWIIGMGLAFALIALAYTFFA. Residues 52–322 are Periplasmic-facing; that stretch reads RQEWSSTAIT…EPVKRDSPRR (271 aa). A helical transmembrane segment spans residues 323–343; it reads AFLMIMWGIVGGLIGAGVALT. Topologically, residues 344–348 are cytoplasmic; it reads RRCSK.

Belongs to the WzzB/Cld/Rol family. Homooctamer. Probably part of a complex composed of WzxE, WzyE and WzzE.

Its subcellular location is the cell inner membrane. Its pathway is bacterial outer membrane biogenesis; enterobacterial common antigen biosynthesis. Functionally, modulates the polysaccharide chain length of enterobacterial common antigen (ECA). The sequence is that of ECA polysaccharide chain length modulation protein from Escherichia coli O157:H7.